We begin with the raw amino-acid sequence, 88 residues long: MKAGIHPDYHPVVFEDSSTGKRFLTRSTATSERTVEWTDGNTYPLLVVDVTADSHPFWTGAQRLLDTQGRVEKFNRKYGRRVRGGQEG.

The protein belongs to the bacterial ribosomal protein bL31 family. Type B subfamily. Part of the 50S ribosomal subunit.

The sequence is that of Large ribosomal subunit protein bL31B from Nocardia farcinica (strain IFM 10152).